We begin with the raw amino-acid sequence, 242 residues long: C-reactive protein 1.4 (242 aa).

A signal peptide spans 1–24 (MKTFHGPTFGTAVFLYLLLFLTSA). Residues 30–241 (ITSKVKFPPS…GVVLSPNEIC (212 aa)) enclose the Pentraxin (PTX) domain. 2 residues coordinate phosphocholine: Thr-60 and Tyr-63. 2 disulfide bridges follow: Cys-62–Cys-125 and Cys-112–Cys-144. Asp-85 and Asn-86 together coordinate Ca(2+). An N-linked (GlcNAc...) asparagine glycan is attached at Asn-147. The Ca(2+) site is built by Glu-168, Gln-169, Asp-170, and Gln-180. A disulfide bond links Cys-207 and Cys-241.

This sequence belongs to the pentraxin family. As to quaternary structure, homopentamer. Pentraxin (or pentaxin) have a discoid arrangement of 5 non-covalently bound subunits. The cofactor is Ca(2+).

It is found in the secreted. Functionally, might serve the role of immunoglobulins. This is C-reactive protein 1.4 from Limulus polyphemus (Atlantic horseshoe crab).